Reading from the N-terminus, the 378-residue chain is MTDKKVIVLAAGGTGGHLFPAEAVAVELRQRGYDVHLVTDERAQRFVRCFDEEHIHIISSATFTRRHPFSLIKTFWMLLKGMGQSLALFYKLCPVLVGGFGGYPTFPPLIVAAFMRRVTFIHEQNAVMGRANRVLAVFVSAIAGGLLSQNNRYAHKTVLTGNPVRDVVLNAAEIPYYPSEGEKPFHFLIFGGSQGASFFSRIVPEAIALLDDNIRQRLRIVQQVRGDTEELIKIYRQMDVQAEVAPFFDDMAERMARSQFILSRAGASSVCEIAVIGRPALLIPYPHALDHDQAANAALLARVGGAQIISEKDLNAQRLASLLTEAFCAPHLLEKQALAAKKVGQPYATRRLADMAEALIVGRSLSDVKEEFFDENAA.

UDP-N-acetyl-alpha-D-glucosamine-binding positions include 14 to 16 (TGG), Asn-125, Arg-165, Ser-193, and Gln-293.

It belongs to the glycosyltransferase 28 family. MurG subfamily.

It is found in the cell inner membrane. It carries out the reaction di-trans,octa-cis-undecaprenyl diphospho-N-acetyl-alpha-D-muramoyl-L-alanyl-D-glutamyl-meso-2,6-diaminopimeloyl-D-alanyl-D-alanine + UDP-N-acetyl-alpha-D-glucosamine = di-trans,octa-cis-undecaprenyl diphospho-[N-acetyl-alpha-D-glucosaminyl-(1-&gt;4)]-N-acetyl-alpha-D-muramoyl-L-alanyl-D-glutamyl-meso-2,6-diaminopimeloyl-D-alanyl-D-alanine + UDP + H(+). It participates in cell wall biogenesis; peptidoglycan biosynthesis. In terms of biological role, cell wall formation. Catalyzes the transfer of a GlcNAc subunit on undecaprenyl-pyrophosphoryl-MurNAc-pentapeptide (lipid intermediate I) to form undecaprenyl-pyrophosphoryl-MurNAc-(pentapeptide)GlcNAc (lipid intermediate II). The polypeptide is UDP-N-acetylglucosamine--N-acetylmuramyl-(pentapeptide) pyrophosphoryl-undecaprenol N-acetylglucosamine transferase (Bartonella henselae (strain ATCC 49882 / DSM 28221 / CCUG 30454 / Houston 1) (Rochalimaea henselae)).